A 580-amino-acid chain; its full sequence is Ran GTPase-activating protein 1 (580 aa).

LRR repeat units lie at residues 48-71, 111-134, 141-168, 207-230, 235-258, 292-315, and 320-343; these read YEGL…AIAE, GAQL…GFEA, CFTL…ALTE, IGTL…ALAE, NSLL…AMAE, LHKL…SLAE, and KSDL…QVQE. A disordered region spans residues 356–429; it reads SLSDDEDEDD…PPKLPVDAST (74 aa). The segment covering 358–399 has biased composition (acidic residues); the sequence is SDDEDEDDDDDDEDDDDDEDDENDDEEVEEEEEEVEEEEGGD.

Belongs to the RNA1 family. In terms of assembly, homodimer. Identified in a complex with RANBP2 and the ubiquitin-conjugating enzyme E2 (UBE2I). May be sumoylated.

The protein localises to the cytoplasm. It localises to the nucleus. It is found in the nucleoplasm. The protein resides in the nucleus envelope. Its subcellular location is the chromosome. The protein localises to the centromere. It localises to the kinetochore. It is found in the cytoskeleton. The protein resides in the spindle. GTPase activator for RAN, converting it to the GDP-bound state. Converts cytoplasmic GTP-bound RAN to GDP-bound RAN, which is required for RAN-mediated nuclear import and export. The protein is Ran GTPase-activating protein 1 (rangap1) of Xenopus laevis (African clawed frog).